Reading from the N-terminus, the 257-residue chain is Imidazole glycerol phosphate synthase subunit HisF (257 aa).

Active-site residues include Asp-12 and Asp-131.

Belongs to the HisA/HisF family. In terms of assembly, heterodimer of HisH and HisF.

It is found in the cytoplasm. It catalyses the reaction 5-[(5-phospho-1-deoxy-D-ribulos-1-ylimino)methylamino]-1-(5-phospho-beta-D-ribosyl)imidazole-4-carboxamide + L-glutamine = D-erythro-1-(imidazol-4-yl)glycerol 3-phosphate + 5-amino-1-(5-phospho-beta-D-ribosyl)imidazole-4-carboxamide + L-glutamate + H(+). Its pathway is amino-acid biosynthesis; L-histidine biosynthesis; L-histidine from 5-phospho-alpha-D-ribose 1-diphosphate: step 5/9. Its function is as follows. IGPS catalyzes the conversion of PRFAR and glutamine to IGP, AICAR and glutamate. The HisF subunit catalyzes the cyclization activity that produces IGP and AICAR from PRFAR using the ammonia provided by the HisH subunit. In Cellvibrio japonicus (strain Ueda107) (Pseudomonas fluorescens subsp. cellulosa), this protein is Imidazole glycerol phosphate synthase subunit HisF.